The sequence spans 147 residues: uncharacterized protein (147 aa).

Positions 1–37 (MVALFKSSLGRPEQHQTPQIRISPASSNVEHSEKQPR) are disordered. The span at 15–29 (HQTPQIRISPASSNV) shows a compositional bias: polar residues. Positions 71-147 (PIPVTKEELA…LKTSFVGFLV (77 aa)) constitute a Cytochrome b5 heme-binding domain. Residues H106 and H129 each coordinate heme.

This sequence belongs to the cytochrome b5 family.

This is an uncharacterized protein from Schizosaccharomyces pombe (strain 972 / ATCC 24843) (Fission yeast).